The sequence spans 253 residues: tRNA uridine(34) hydroxylase (253 aa).

The 95-residue stretch at histidine 127–tyrosine 221 folds into the Rhodanese domain. Cysteine 181 serves as the catalytic Cysteine persulfide intermediate.

The protein belongs to the TrhO family.

The catalysed reaction is uridine(34) in tRNA + AH2 + O2 = 5-hydroxyuridine(34) in tRNA + A + H2O. Catalyzes oxygen-dependent 5-hydroxyuridine (ho5U) modification at position 34 in tRNAs. The sequence is that of tRNA uridine(34) hydroxylase from Xanthomonas campestris pv. campestris (strain 8004).